The following is a 684-amino-acid chain: Probable metal-nicotianamine transporter YSL9 (684 aa).

The segment covering 1–10 (MKQERRRKRQ) has biased composition (basic residues). A disordered region spans residues 1–55 (MKQERRRKRQPGPPRLELVVAHPREEEMAGLDGGGDAEEGATHARGGGGAPPPWR). Transmembrane regions (helical) follow at residues 58-78 (LTAR…VIVM), 82-102 (LTTG…FVVL), 130-150 (CAVA…LLGL), 174-194 (GIAW…LALV), 234-254 (VNGF…QWFY), 295-315 (LVNL…WPLI), 341-361 (FICV…IVAL), 402-422 (LAFS…PMMF), 430-450 (VVIA…GAGL), 462-482 (IALF…AGLV), 515-535 (IIAQ…TFFL), 568-588 (FSAL…FAVA), 612-632 (VPFL…LIVF), and 642-662 (AALM…LWIF).

This sequence belongs to the YSL (TC 2.A.67.2) family.

Its subcellular location is the membrane. In terms of biological role, may be involved in the transport of nicotianamine-chelated metals. The chain is Probable metal-nicotianamine transporter YSL9 (YSL9) from Oryza sativa subsp. japonica (Rice).